Here is a 297-residue protein sequence, read N- to C-terminus: Adrenocorticotropic hormone receptor (297 aa).

The Extracellular portion of the chain corresponds to 1–23 (MKHIITPYEHTNDTARNNSDCPD). 2 N-linked (GlcNAc...) asparagine glycosylation sites follow: Asn12 and Asn17. 2 disulfide bridges follow: Cys21–Cys253 and Cys245–Cys251. The helical transmembrane segment at 24-49 (VVLPEEIFFTISIIGVLENLIVLLAV) threads the bilayer. The Cytoplasmic segment spans residues 50–58 (VKNKNLQCP). A helical transmembrane segment spans residues 59–79 (MYFFICSLAISDMLGSLYKIL). At 80-104 (ENILIMFRNRGYLQPRGNFESTADD) the chain is on the extracellular side. The helical transmembrane segment at 105 to 126 (IIDCMFILSLLGSIFSLSVIAA) threads the bilayer. The Cytoplasmic segment spans residues 127-147 (DRYITIFHALQYHSIVTMRRT). The chain crosses the membrane as a helical span at residues 148-168 (IITLTVIWIFCTGSGIAMVIF). Topologically, residues 169–180 (SHHVPTVLTFTS) are extracellular. Residues 181 to 199 (LFPLMLVFILCLYIHMFLL) traverse the membrane as a helical segment. The Cytoplasmic segment spans residues 200-217 (ARSHARKISTLPRANMKG). A helical membrane pass occupies residues 218–244 (AITLTILLGVFIFCWAPFILHVLLMTF). Over 245-256 (CPNNPYCVCYMS) the chain is Extracellular. The helical transmembrane segment at 257-278 (LFQINGMLIMCNAVIDPFIYAF) threads the bilayer. Residues 279–297 (RSPELRDAFKKMFSCHRYQ) are Cytoplasmic-facing. The S-palmitoyl cysteine moiety is linked to residue Cys293.

Belongs to the G-protein coupled receptor 1 family. Homodimer. Interacts with corticotropin (ACTH). Interacts with MRAP; this interaction targets MC2R to the plasma membrane. Interacts with MRAP2; competing with MRAP for binding to MC2R and impairing the binding of corticotropin (ACTH). In terms of processing, ubiquitinated by MGRN1 that may be involved in post-endocytic trafficking and/or degradation of internalized receptor.

It is found in the cell membrane. Its function is as follows. Hormone receptor primarily expressed in adrenal cortex that plays a key role in regulating adrenocortical function. Upon corticotropin (ACTH) binding, facilitates the release of adrenal glucocorticoids, including cortisol and corticosterone. In addition, MC2R is required for fetal and neonatal adrenal gland development. Mechanistically, activates adenylate cyclase (cAMP), the MAPK cascade as well as the cAMP-dependent protein kinase A pathway leading to steroidogenic factor 1/NR5A1-mediated transcriptional activation. In Mesocricetus auratus (Golden hamster), this protein is Adrenocorticotropic hormone receptor (MC2R).